The primary structure comprises 165 residues: Small ribosomal subunit protein uS5 (165 aa).

The S5 DRBM domain occupies 10-73 (QIEKLISLNR…TSARKNLRFV (64 aa)).

It belongs to the universal ribosomal protein uS5 family. Part of the 30S ribosomal subunit. Contacts proteins S4 and S8.

Functionally, with S4 and S12 plays an important role in translational accuracy. Its function is as follows. Located at the back of the 30S subunit body where it stabilizes the conformation of the head with respect to the body. The chain is Small ribosomal subunit protein uS5 from Borreliella afzelii (strain PKo) (Borrelia afzelii).